Reading from the N-terminus, the 247-residue chain is Probable transcriptional regulatory protein YPO2055/y2255/YP_1898 (247 aa).

It belongs to the TACO1 family.

It localises to the cytoplasm. This is Probable transcriptional regulatory protein YPO2055/y2255/YP_1898 from Yersinia pestis.